Here is an 802-residue protein sequence, read N- to C-terminus: Ras GTPase-activating protein 4 (802 aa).

2 consecutive C2 domains span residues 1-105 (MAKR…SGWT) and 116-232 (VQGE…EGWF). Residues Asp21, Asp27, Asp74, Asp76, Ser79, Asp82, Asp149, Asp155, Asp202, Asp204, Ser207, and Asp210 each coordinate Ca(2+). In terms of domain architecture, Ras-GAP spans 317–545 (GLAKDFLDLL…AQLKDFIMKL (229 aa)). One can recognise a PH domain in the interval 565–672 (PPVKEGPLFI…WLSALRKAST (108 aa)). The Btk-type zinc-finger motif lies at 674–710 (NRGLLRSYHPGIFRGDKWSCCHQKDKTDQGCDKTHSR). Zn(2+) is bound by residues His682, Cys693, Cys694, and Cys704.

It depends on Ca(2+) as a cofactor. As to expression, isoform 2 is expressed in osteoblasts.

It localises to the cytoplasm. The protein localises to the cytosol. The protein resides in the cell membrane. Functionally, ca(2+)-dependent Ras GTPase-activating protein, that switches off the Ras-MAPK pathway following a stimulus that elevates intracellular calcium. Functions as an adaptor for Cdc42 and Rac1 during FcR-mediated phagocytosis. Isoform 2 activates the Ras pathway and promotes RANKL shedding by modulating the expression of MMP14. The polypeptide is Ras GTPase-activating protein 4 (Rasa4) (Mus musculus (Mouse)).